A 1736-amino-acid chain; its full sequence is Collagen alpha-2(XI) chain (1736 aa).

The N-terminal stretch at 1 to 27 (MERCSRCHHLLLLVLLLLWLSAAPAWA) is a signal peptide. Residues 57–228 (DVAYRVSRPA…ESCDQKELEC (172 aa)) enclose the Laminin G-like domain. Residues 215–486 (QAAYESCDQK…ILQQARVALR (272 aa)) are nonhelical region. Disordered stretches follow at residues 229–465 (EGGW…DKGP) and 485–1539 (LRGP…SPGG). The segment covering 258–270 (PQNQEPQAQSTES) has biased composition (polar residues). Residues 363–376 (ALSAETARSEAAAR) show a composition bias toward low complexity. 3 consecutive Collagen-like domains span residues 399–447 (GPPG…GPPG), 487–545 (GPPG…ADGA), and 546–587 (RGMP…PPGE). Pro residues predominate over residues 400-413 (PPGPEGPAGFPGPP). The segment at 487–1500 (GPPGPMGYTG…PGHPGPPGEV (1014 aa)) is triple-helical region. The span at 515 to 533 (DLGPQGPRGPQGLMGPPGK) shows a compositional bias: low complexity. A compositionally biased stretch (pro residues) spans 615 to 624 (KGPPGIPGPP). Positions 650-663 (QQGTPGTQGLPGPQ) are enriched in low complexity. Positions 765–774 (RGEDGPEGPK) are enriched in basic and acidic residues. The span at 842–861 (PTGPRGQRGPRGATGKSGAK) shows a compositional bias: low complexity. The span at 994–1003 (GTAGGPGLKG) shows a compositional bias: gly residues. The span at 1029 to 1040 (IGPPGRPGPQGP) shows a compositional bias: pro residues. 2 consecutive Collagen-like domains span residues 1072 to 1127 (GPAG…ADGE) and 1128 to 1172 (PGAR…ETGD). The segment covering 1115 to 1133 (PVGQPGAAGADGEPGARGP) has biased composition (low complexity). A compositionally biased stretch (pro residues) spans 1176–1187 (MGPPGPPGPRGP). Residues 1217–1230 (ESGSPGVQGEPGVK) are compositionally biased toward low complexity. 2 stretches are compositionally biased toward basic and acidic residues: residues 1232-1241 (PRGERGEKGE) and 1287-1296 (DGAKGDRGED). 2 stretches are compositionally biased toward low complexity: residues 1341 to 1364 (PGAV…KPGP) and 1376 to 1386 (QQGRPGATGQA). Positions 1388-1397 (PPGPVGPPGL) are enriched in pro residues. Over residues 1413-1422 (PGLIGLIGPP) the composition is skewed to low complexity. Positions 1444-1499 (GETGIPGASGPIGPGGPPGLPGPAGPKGAKGATGPAGPKGEKGVQGPPGHPGPPGE) constitute a Collagen-like 6 domain. A compositionally biased stretch (pro residues) spans 1457-1467 (PGGPPGLPGPA). Residues 1469 to 1481 (PKGAKGATGPAGP) show a composition bias toward low complexity. Positions 1501–1736 (IQPLPIQMPK…VLLGPVCFMG (236 aa)) are cleaved as a propeptide — C-terminal propeptide. The 195-residue stretch at 1541-1735 (EEIFGSLDSL…GVLLGPVCFM (195 aa)) folds into the Fibrillar collagen NC1 domain. A disulfide bridge links cysteine 1571 with cysteine 1603. Ca(2+) contacts are provided by aspartate 1589, asparagine 1591, glutamine 1592, cysteine 1594, and aspartate 1597. Residues asparagine 1604 and asparagine 1650 are each glycosylated (N-linked (GlcNAc...) asparagine). 2 disulfide bridges follow: cysteine 1612/cysteine 1733 and cysteine 1655/cysteine 1689.

Belongs to the fibrillar collagen family. Trimers composed of three different chains: alpha 1(XI), alpha 2(XI), and alpha 3(XI). Alpha 3(XI) is a post-translational modification of alpha 1(II). Alpha 1(V) can also be found instead of alpha 3(XI)=1(II). Prolines at the third position of the tripeptide repeating unit (G-X-Y) are hydroxylated in some or all of the chains.

It localises to the secreted. Its subcellular location is the extracellular space. The protein localises to the extracellular matrix. In terms of biological role, may play an important role in fibrillogenesis by controlling lateral growth of collagen II fibrils. The protein is Collagen alpha-2(XI) chain (COL11A2) of Bos taurus (Bovine).